We begin with the raw amino-acid sequence, 651 residues long: Acetyl-coenzyme A synthetase (651 aa).

CoA-binding positions include 189–192 (RGGK), T311, and N335. Residues 387-389 (GEP), 411-416 (DTWWQT), D500, and R515 each bind ATP. S523 is a binding site for CoA. An ATP-binding site is contributed by R526. Residues V537, H539, and V542 each coordinate Mg(2+). Residue R584 coordinates CoA. Residue K609 is modified to N6-acetyllysine.

This sequence belongs to the ATP-dependent AMP-binding enzyme family. It depends on Mg(2+) as a cofactor. Acetylated. Deacetylation by the SIR2-homolog deacetylase activates the enzyme.

The catalysed reaction is acetate + ATP + CoA = acetyl-CoA + AMP + diphosphate. In terms of biological role, catalyzes the conversion of acetate into acetyl-CoA (AcCoA), an essential intermediate at the junction of anabolic and catabolic pathways. AcsA undergoes a two-step reaction. In the first half reaction, AcsA combines acetate with ATP to form acetyl-adenylate (AcAMP) intermediate. In the second half reaction, it can then transfer the acetyl group from AcAMP to the sulfhydryl group of CoA, forming the product AcCoA. This chain is Acetyl-coenzyme A synthetase, found in Agrobacterium fabrum (strain C58 / ATCC 33970) (Agrobacterium tumefaciens (strain C58)).